A 491-amino-acid polypeptide reads, in one-letter code: Phosphoethanolamine N-methyltransferase 1 (491 aa).

Ala2 is modified (N-acetylalanine). Gly61, Arg66, Asp82, Asp107, Val108, and Asn126 together coordinate S-adenosyl-L-homocysteine. Residues Ser159, Ser164, Gly165, Arg169, and Tyr176 each contribute to the phosphocholine site. N-methylethanolamine phosphate is bound by residues 245–246 (QY) and Tyr254. Tyr254 provides a ligand contact to phosphocholine. Residues Val263, Ser264, Gly290, Asp312, Asp338, Cys339, and Arg355 each coordinate S-adenosyl-L-homocysteine. The phosphocholine site is built by Tyr386, Tyr400, Arg404, Tyr406, and Lys472. N-methylethanolamine phosphate is bound by residues Tyr386, Tyr400, 404 to 406 (RGY), and Lys472.

It belongs to the class I-like SAM-binding methyltransferase superfamily. PEAMT family. As to expression, highly expressed in the meristem and elongation zones of the root. Expressed in differentiated root epidermal cells. Highly expressed in leaf vasculature.

It is found in the cytoplasm. The catalysed reaction is phosphoethanolamine + S-adenosyl-L-methionine = N-methylethanolamine phosphate + S-adenosyl-L-homocysteine + H(+). The enzyme catalyses N-methylethanolamine phosphate + S-adenosyl-L-methionine = N,N-dimethylethanolamine phosphate + S-adenosyl-L-homocysteine + H(+). It catalyses the reaction N,N-dimethylethanolamine phosphate + S-adenosyl-L-methionine = phosphocholine + S-adenosyl-L-homocysteine + H(+). The protein operates within phospholipid metabolism; phosphatidylcholine biosynthesis; phosphocholine from phosphoethanolamine: step 1/1. Its function is as follows. Involved in phosphocholine biosynthesis. Catalyzes the N-methylation of phosphoethanolamine, phosphomonomethylethanolamine and phosphodimethylethanolamine, the three methylation steps required to convert phosphoethanolamine to phosphocholine (PC). Required for root system development and epidermal cell integrity through its role in choline and phospholipid metabolism. In association with NMT3, regulates PC homeostasis, phase transition at the shoot apex, coordinated organ development, and fertility. In association with NMT3, involved in phosphatidylcholine biosynthesis and vascular development. In association with NMT2, involved in the production of phosphatidylcholine in roots, essential for root development. In association with NMT2 produce phosphocholine mainly for leaf growth maintenance. Contributes to the regulation of overall root zonation dynamics through reactive oxygen species (ROS) and auxin-regulated cell differentiation. Participates in root development of primary root elongation under salt stress conditions by balancing reactive oxygen species (ROS) production and distribution through abscisic acid (ABA) signaling. This is Phosphoethanolamine N-methyltransferase 1 from Arabidopsis thaliana (Mouse-ear cress).